Reading from the N-terminus, the 849-residue chain is DNA mismatch repair protein MutS (849 aa).

602–609 lines the ATP pocket; that stretch reads GPNMSGKS.

This sequence belongs to the DNA mismatch repair MutS family.

In terms of biological role, this protein is involved in the repair of mismatches in DNA. It is possible that it carries out the mismatch recognition step. This protein has a weak ATPase activity. The polypeptide is DNA mismatch repair protein MutS (Streptococcus mutans serotype c (strain ATCC 700610 / UA159)).